The primary structure comprises 133 residues: MARVKRGVTAHAKHKKVLKQAEGFYGRRKNTIRAAKAAVDRSKQYAYRDRKNRKRTFRALWIQRINAAVRAEGLTYGRFIDGLSKAGIEIDRKVLSDIAIHESAAFSALVASAKKALEYLKDTTPNAFEGAVK.

Belongs to the bacterial ribosomal protein bL20 family.

Functionally, binds directly to 23S ribosomal RNA and is necessary for the in vitro assembly process of the 50S ribosomal subunit. It is not involved in the protein synthesizing functions of that subunit. The polypeptide is Large ribosomal subunit protein bL20 (Bartonella henselae (strain ATCC 49882 / DSM 28221 / CCUG 30454 / Houston 1) (Rochalimaea henselae)).